The chain runs to 105 residues: Putative membrane protein insertion efficiency factor (105 aa).

The protein belongs to the UPF0161 family.

Its subcellular location is the cell membrane. Its function is as follows. Could be involved in insertion of integral membrane proteins into the membrane. The protein is Putative membrane protein insertion efficiency factor of Bifidobacterium longum (strain NCC 2705).